Reading from the N-terminus, the 920-residue chain is MDVDKQMLQWRKRAWLNSNQLYGELTDIIIKDTGFTSSFANLIDNSEVDSFSKNIVNIFTTANKTLPLIKDLIYNEFNTKVLAEGEGSILRGNSIVNKIEGAYVRLIGANYLRFVLSDLVTKVVLDSDLKLEIDPRKLNDYYEDKIEFEKKVAEVELRDNQKSLHNIAQQFLDRITDPSVVVEMPREIRAIADYTAESALRYAPESLAPLVGGFIMLRFFSPAIVTPEYSKLLSSEVAPSKRAKRNLVLLAKVLQNASNGVLFGGKEEFMTCMNDFIIGNKEKMSAYFNLICKDPLNQNNKWSDLEGVKSATTTTTILTPTNTTTSSNGSGGTTWAKPIVGGSKWLATTPSGNTPSPAISNASSAHNGKSNNTTNNNNNNNNNNNNNNNNNNNNNNNSNKTTTTATTISSNSWDVYIKNVQIQDLFDLHRIFDSYKEKIVNKIINTNNNNANNANNNNTNNINNKTAIRVIEILKELGPSPKTKTERKKKETDAAEEPTTSLQNGASMGSAFDECTHMLERSRFLFQGPNDKNDRSVFYLIVNRVKPEVFDNVNPLIAHIFKVMDICVNSPYTLVVDMSWAHISNDLKKAIFTHLPKLAEIFSRKYKKNIDKIFIVHPSAYTRAVIYFMSAFTSRKLKRKIHDIYNWKDLSQYIDIENIALPETSKDFITKSYRVVKVNSKGKRQERLIKFTSNSLLNIDPKTHRIQNEKRINEIDEITSRLGSIEINMKLSGESKKSGSILGTKIGFLSINNNNNNNNDDSNGNHDINESNSRKYICNHELERDHILQDIFETGFKMGLQSKSTKSLPTEYKVIKVNNVGKHQERIFKLTIDSLLNLDQQRIKSENSFAGIEEVILDPHDDDIVWLKFKSEPSRRKIICTVKGEGKLLLEVLTDAINKYQTTIDIQEGALKLDAEEGFL.

The Ras-GAP domain occupies asparagine 63–isoleucine 291. Disordered regions lie at residues lysine 344–alanine 405 and leucine 477–methionine 508. Positions leucine 346–lysine 369 are enriched in polar residues. Residues serine 370–alanine 405 are compositionally biased toward low complexity. The segment covering proline 498–serine 507 has biased composition (polar residues). The CRAL-TRIO domain maps to phenylalanine 512–tyrosine 673.

Its function is as follows. Regulator of the GTPase activity of Ras, mainly RasG and RasB. The polypeptide is Neurofibromin-A (nfaA) (Dictyostelium discoideum (Social amoeba)).